The sequence spans 2294 residues: Protein Ycf2 (2294 aa).

Position 1635–1642 (1635–1642 (GSIGTGRS)) interacts with ATP.

Belongs to the Ycf2 family.

The protein localises to the plastid. The protein resides in the chloroplast stroma. Probable ATPase of unknown function. Its presence in a non-photosynthetic plant (Epifagus virginiana) and experiments in tobacco indicate that it has an essential function which is probably not related to photosynthesis. The chain is Protein Ycf2 from Ranunculus macranthus (Large buttercup).